The primary structure comprises 412 residues: Hyaluronidase-3 (412 aa).

Positions 1-22 (MITQLGLTLVVGLTLCLVHVQA) are cleaved as a signal peptide. Intrachain disulfides connect Cys-42/Cys-332, Cys-206/Cys-221, Cys-357/Cys-368, Cys-362/Cys-396, and Cys-398/Cys-407. Residue Asn-69 is glycosylated (N-linked (GlcNAc...) asparagine). Catalysis depends on Glu-129, which acts as the Proton donor. Asn-216 carries an N-linked (GlcNAc...) asparagine glycan. The region spanning 353–408 (AATACSHQRCHGHGRCSWKDPGQMEAFLHLQPDDNLGAWKSFRCRCYLGWSGPTCL) is the EGF-like domain.

This sequence belongs to the glycosyl hydrolase 56 family. Post-translationally, N-glycosylated.

It localises to the secreted. It is found in the cell membrane. The protein resides in the cytoplasmic vesicle. Its subcellular location is the secretory vesicle. The protein localises to the acrosome. It localises to the endoplasmic reticulum. It is found in the early endosome. The catalysed reaction is Random hydrolysis of (1-&gt;4)-linkages between N-acetyl-beta-D-glucosamine and D-glucuronate residues in hyaluronate.. Its function is as follows. Facilitates sperm penetration into the layer of cumulus cells surrounding the egg by digesting hyaluronic acid. Involved in induction of the acrosome reaction in the sperm. Involved in follicular atresia, the breakdown of immature ovarian follicles that are not selected to ovulate. Induces ovarian granulosa cell apoptosis, possibly via apoptotic signaling pathway involving CASP8 and CASP3 activation, and poly(ADP-ribose) polymerase (PARP) cleavage. Has no hyaluronidase activity in embryonic fibroblasts in vitro. Has no hyaluronidase activity in granulosa cells in vitro. The polypeptide is Hyaluronidase-3 (Hyal3) (Rattus norvegicus (Rat)).